The sequence spans 770 residues: PH and SEC7 domain-containing protein 2 (770 aa).

Residues 1-24 (MDEEKLPCELHKEGSATQEDHGLE) are compositionally biased toward basic and acidic residues. 2 disordered regions span residues 1–65 (MDEE…RGPD) and 181–304 (IQQR…ANGC). The span at 32 to 45 (QNGTAASEGLSSHI) shows a compositional bias: polar residues. The residue at position 188 (serine 188) is a Phosphoserine. 2 stretches are compositionally biased toward low complexity: residues 216-234 (LGSPLRRSISSSRSENVLS) and 285-296 (ELSSSEGLEPGS). The SEC7 domain maps to 256–459 (DDEDDEDTDK…KTLYNSIKNE (204 aa)). The PH domain occupies 509–622 (TTYKHGVLTR…WILRINLVAA (114 aa)). The helical transmembrane segment at 619-636 (LVAAIFSAPAFPAAVSSM) threads the bilayer. Residues 650-677 (RLCQEEQLRSHENKLRQVTAELAEHRCH) are a coiled coil. Positions 738–770 (PALRKTHSSPALSLGHGPVTGSKATKDTSASDT) are disordered.

It belongs to the PSD family.

It is found in the cell membrane. It localises to the cell projection. The protein resides in the ruffle membrane. The protein localises to the cleavage furrow. This is PH and SEC7 domain-containing protein 2 (Psd2) from Mus musculus (Mouse).